The following is a 356-amino-acid chain: MITKQQVLEFLKDYDLDNITIATICSHSSLQIFDGARKEGFRTLGICVGKPPKFYDAFPRAKPDEYLVLEDYEDLINRAEELRKKNTIIIPHSSLIYYLGRENFTGMAVPTFGNRTSIEWESDRDKESRWFLGAGIQMPKKIDDPHDIKGPVMVEYEGAKGGKGFFVAKNYKEFSELVDHTQKYTIHEYINGTRYDLHYFYSPIRNDGYTLSKGSLELLSMDRRVESNADEIFRLGSPRELIESGICPTYVLTGNVPLVARESILSRIFSLGEQVVEESLALFGGITGAFCIEAVITDSLDIKVFELSSRIVSGTNLYISGSPYSDLMQKRLSTGRRIALEIKEAAKSNQLDKILS.

Residues H27 and S94 each contribute to the 5-amino-1-(5-phospho-beta-D-ribosyl)imidazole-4-carboxamide site. Residues 101–333 (RENFTGMAVP…YSDLMQKRLS (233 aa)) form the ATP-grasp domain. Residues 145–196 (PHDI…TRYD) and E226 contribute to the ATP site. 5-amino-1-(5-phospho-beta-D-ribosyl)imidazole-4-carboxamide is bound at residue N255. Mg(2+) contacts are provided by E293 and E306.

This sequence belongs to the phosphohexose mutase family. The cofactor is Mg(2+). It depends on Mn(2+) as a cofactor.

The enzyme catalyses 5-amino-1-(5-phospho-beta-D-ribosyl)imidazole-4-carboxamide + formate + ATP = 5-formamido-1-(5-phospho-D-ribosyl)imidazole-4-carboxamide + ADP + phosphate. Its pathway is purine metabolism; IMP biosynthesis via de novo pathway; 5-formamido-1-(5-phospho-D-ribosyl)imidazole-4-carboxamide from 5-amino-1-(5-phospho-D-ribosyl)imidazole-4-carboxamide (formate route): step 1/1. Its function is as follows. Catalyzes the ATP- and formate-dependent formylation of 5-aminoimidazole-4-carboxamide-1-beta-d-ribofuranosyl 5'-monophosphate (AICAR) to 5-formaminoimidazole-4-carboxamide-1-beta-d-ribofuranosyl 5'-monophosphate (FAICAR) in the absence of folates. This is 5-formaminoimidazole-4-carboxamide-1-(beta)-D-ribofuranosyl 5'-monophosphate synthetase 2 from Methanosarcina mazei (strain ATCC BAA-159 / DSM 3647 / Goe1 / Go1 / JCM 11833 / OCM 88) (Methanosarcina frisia).